We begin with the raw amino-acid sequence, 337 residues long: Tryptophan--tRNA ligase 2 (337 aa).

ATP contacts are provided by residues 13 to 15 (QPT) and 22 to 23 (GN). The short motif at 14 to 23 (PTAGSFHLGN) is the 'HIGH' region element. Residue aspartate 139 coordinates L-tryptophan. ATP contacts are provided by residues 151-153 (GED), isoleucine 190, and 199-203 (KMSKS). A 'KMSKS' region motif is present at residues 199 to 203 (KMSKS).

Belongs to the class-I aminoacyl-tRNA synthetase family. Homodimer.

It localises to the cytoplasm. The catalysed reaction is tRNA(Trp) + L-tryptophan + ATP = L-tryptophyl-tRNA(Trp) + AMP + diphosphate + H(+). Functionally, catalyzes the attachment of tryptophan to tRNA(Trp). This is Tryptophan--tRNA ligase 2 from Streptomyces avermitilis (strain ATCC 31267 / DSM 46492 / JCM 5070 / NBRC 14893 / NCIMB 12804 / NRRL 8165 / MA-4680).